Here is a 167-residue protein sequence, read N- to C-terminus: Crossover junction endodeoxyribonuclease RuvC (167 aa).

Active-site residues include D11, E71, and D143. The Mg(2+) site is built by D11, E71, and D143.

Belongs to the RuvC family. In terms of assembly, homodimer which binds Holliday junction (HJ) DNA. The HJ becomes 2-fold symmetrical on binding to RuvC with unstacked arms; it has a different conformation from HJ DNA in complex with RuvA. In the full resolvosome a probable DNA-RuvA(4)-RuvB(12)-RuvC(2) complex forms which resolves the HJ. Requires Mg(2+) as cofactor.

Its subcellular location is the cytoplasm. It catalyses the reaction Endonucleolytic cleavage at a junction such as a reciprocal single-stranded crossover between two homologous DNA duplexes (Holliday junction).. Its function is as follows. The RuvA-RuvB-RuvC complex processes Holliday junction (HJ) DNA during genetic recombination and DNA repair. Endonuclease that resolves HJ intermediates. Cleaves cruciform DNA by making single-stranded nicks across the HJ at symmetrical positions within the homologous arms, yielding a 5'-phosphate and a 3'-hydroxyl group; requires a central core of homology in the junction. The consensus cleavage sequence is 5'-(A/T)TT(C/G)-3'. Cleavage occurs on the 3'-side of the TT dinucleotide at the point of strand exchange. HJ branch migration catalyzed by RuvA-RuvB allows RuvC to scan DNA until it finds its consensus sequence, where it cleaves and resolves the cruciform DNA. The protein is Crossover junction endodeoxyribonuclease RuvC of Bartonella bacilliformis (strain ATCC 35685 / KC583 / Herrer 020/F12,63).